The primary structure comprises 68 residues: Large ribosomal subunit protein bL33c (68 aa).

The protein belongs to the bacterial ribosomal protein bL33 family.

The protein localises to the plastid. In Cuscuta exaltata (Tall dodder), this protein is Large ribosomal subunit protein bL33c.